The primary structure comprises 184 residues: ATP synthase subunit b, chloroplastic (184 aa).

The chain crosses the membrane as a helical span at residues 27-49 (LATNPINLSVVLGVLIFFGKGVL).

The protein belongs to the ATPase B chain family. As to quaternary structure, F-type ATPases have 2 components, F(1) - the catalytic core - and F(0) - the membrane proton channel. F(1) has five subunits: alpha(3), beta(3), gamma(1), delta(1), epsilon(1). F(0) has four main subunits: a(1), b(1), b'(1) and c(10-14). The alpha and beta chains form an alternating ring which encloses part of the gamma chain. F(1) is attached to F(0) by a central stalk formed by the gamma and epsilon chains, while a peripheral stalk is formed by the delta, b and b' chains.

The protein localises to the plastid. It localises to the chloroplast thylakoid membrane. Its function is as follows. F(1)F(0) ATP synthase produces ATP from ADP in the presence of a proton or sodium gradient. F-type ATPases consist of two structural domains, F(1) containing the extramembraneous catalytic core and F(0) containing the membrane proton channel, linked together by a central stalk and a peripheral stalk. During catalysis, ATP synthesis in the catalytic domain of F(1) is coupled via a rotary mechanism of the central stalk subunits to proton translocation. Functionally, component of the F(0) channel, it forms part of the peripheral stalk, linking F(1) to F(0). The chain is ATP synthase subunit b, chloroplastic from Populus alba (White poplar).